The sequence spans 343 residues: Methionine import ATP-binding protein MetN 1 (343 aa).

An ABC transporter domain is found at 2–241 (IKLSNITKVF…PKTPLAQKFI (240 aa)). 38–45 (GASGAGKS) is an ATP binding site.

This sequence belongs to the ABC transporter superfamily. Methionine importer (TC 3.A.1.24) family. The complex is composed of two ATP-binding proteins (MetN), two transmembrane proteins (MetI) and a solute-binding protein (MetQ).

It is found in the cell inner membrane. The catalysed reaction is L-methionine(out) + ATP + H2O = L-methionine(in) + ADP + phosphate + H(+). It carries out the reaction D-methionine(out) + ATP + H2O = D-methionine(in) + ADP + phosphate + H(+). In terms of biological role, part of the ABC transporter complex MetNIQ involved in methionine import. Responsible for energy coupling to the transport system. This is Methionine import ATP-binding protein MetN 1 from Salmonella typhimurium (strain LT2 / SGSC1412 / ATCC 700720).